The primary structure comprises 97 residues: Small ribosomal subunit protein bS20 (97 aa).

Belongs to the bacterial ribosomal protein bS20 family.

Its function is as follows. Binds directly to 16S ribosomal RNA. In Prochlorococcus marinus (strain AS9601), this protein is Small ribosomal subunit protein bS20.